A 36-amino-acid polypeptide reads, in one-letter code: Phosphoglycerate kinase, chloroplastic (36 aa).

(2R)-3-phosphoglycerate is bound by residues Ala22, Asp23, and Asn25.

Belongs to the phosphoglycerate kinase family. As to quaternary structure, monomer. Mg(2+) serves as cofactor.

Its subcellular location is the plastid. It localises to the chloroplast. The catalysed reaction is (2R)-3-phosphoglycerate + ATP = (2R)-3-phospho-glyceroyl phosphate + ADP. It participates in carbohydrate biosynthesis; Calvin cycle. The sequence is that of Phosphoglycerate kinase, chloroplastic from Scenedesmus fuscus (Green alga).